The sequence spans 133 residues: Large-conductance mechanosensitive channel (133 aa).

A run of 3 helical transmembrane segments spans residues 8-28, 30-50, and 73-93; these read FAMKGNVVDLAVGVIIGGAFG, IVTSLVNDVIMPILGLILGGI, and GQFIQNILDFLIISFSIFLFI.

This sequence belongs to the MscL family. In terms of assembly, homopentamer.

Its subcellular location is the cell membrane. Its function is as follows. Channel that opens in response to stretch forces in the membrane lipid bilayer. May participate in the regulation of osmotic pressure changes within the cell. This chain is Large-conductance mechanosensitive channel, found in Hathewaya histolytica (Clostridium histolyticum).